The chain runs to 328 residues: L-lactate dehydrogenase (328 aa).

Residues V18, E39, K46, Y71, and 85–86 contribute to the NAD(+) site; that span reads GA. Positions 88 and 94 each coordinate substrate. NAD(+) is bound by residues S107, 124 to 126, and S149; that span reads AAN. Residue 126–129 coordinates substrate; that stretch reads NPVD. 154–157 is a substrate binding site; sequence DSAR. Residues R159 and H174 each contribute to the beta-D-fructose 1,6-bisphosphate site. H181 serves as the catalytic Proton acceptor. Phosphotyrosine is present on Y226. T235 contributes to the substrate binding site.

The protein belongs to the LDH/MDH superfamily. LDH family. In terms of assembly, homotetramer.

The protein localises to the cytoplasm. It catalyses the reaction (S)-lactate + NAD(+) = pyruvate + NADH + H(+). The protein operates within fermentation; pyruvate fermentation to lactate; (S)-lactate from pyruvate: step 1/1. Its activity is regulated as follows. Allosterically activated by fructose 1,6-bisphosphate (FBP). In terms of biological role, catalyzes the conversion of lactate to pyruvate. The chain is L-lactate dehydrogenase from Streptococcus sanguinis (strain SK36).